Here is a 258-residue protein sequence, read N- to C-terminus: Neurotrophin-3 (258 aa).

A signal peptide spans M1 to G18. Positions N19–R139 are excised as a propeptide. A disordered region spans residues Q60–M85. Residues E67 to R79 show a composition bias toward basic and acidic residues. N-linked (GlcNAc...) asparagine glycosylation occurs at N131. Cystine bridges form between C153-C218, C196-C247, and C206-C249.

It belongs to the NGF-beta family. As to expression, brain and peripheral tissues.

It localises to the secreted. Functionally, seems to promote the survival of visceral and proprioceptive sensory neurons. This is Neurotrophin-3 (Ntf3) from Mus musculus (Mouse).